The primary structure comprises 170 residues: Flavin reductase (NADPH) (170 aa).

It belongs to the non-flavoprotein flavin reductase family.

The catalysed reaction is reduced riboflavin + NADP(+) = riboflavin + NADPH + 2 H(+). Its function is as follows. Catalyzes the NADH-dependent reduction of FAD to provide FADH2 for the halogenase RebH. In Lentzea aerocolonigenes (Lechevalieria aerocolonigenes), this protein is Flavin reductase (NADPH) (rbmH).